Consider the following 516-residue polypeptide: Citrate synthase, glyoxysomal (516 aa).

The transit peptide at 1–43 (MPTDMELSPSNVARHRLAVLAAHLSAASLEPPVMASSLEAHCV) directs the protein to the glyoxysome. Active-site residues include H329, H368, and D424.

This sequence belongs to the citrate synthase family.

It localises to the glyoxysome. It catalyses the reaction oxaloacetate + acetyl-CoA + H2O = citrate + CoA + H(+). It participates in carbohydrate metabolism; glyoxylate cycle; isocitrate from oxaloacetate: step 1/2. This is Citrate synthase, glyoxysomal from Cucurbita maxima (Pumpkin).